We begin with the raw amino-acid sequence, 173 residues long: Probable lipoprotein EnvE (173 aa).

A signal peptide spans 1-20 (MTLLSGKTTLVLCLSSILCG). A lipid anchor (N-palmitoyl cysteine) is attached at C21. C21 carries S-diacylglycerol cysteine lipidation.

The protein resides in the cell membrane. The chain is Probable lipoprotein EnvE (envE) from Salmonella typhimurium (strain LT2 / SGSC1412 / ATCC 700720).